The sequence spans 382 residues: MTEQRPLTIALVAGETSGDILGAGLIRALKERVPNARFVGVAGPRMQAEGCEAWYEMEELAVMGIVEVLGRLRRLLHIRADLTKRFGELKPDVFVGIDAPDFNITLEGNLKKQGVKTIHYVSPSVWAWRQKRVFKIGRATDLVLAFLPFEKAFYDKYNVPCRFIGHTMADAMPLDPDKNGARDVLGIPYDAHCLALLPGSRGAEVEMLSADFLKTAQLLRQTYPDLEIVVPLVNAKRREQFERIKAEVAPDLAVHLLDGMGREAMVASDAALLASGTAALECMLAKCPMVVGYRMKPFTFWLAKRLVKTEYVSLPNLLAGRELVKELLQEECEPQKLAAALLPLLANGKTSHAMHDTFRELHQQIRCNADEQAAQAVLELAQ.

The protein belongs to the LpxB family.

The catalysed reaction is 2-N,3-O-bis[(3R)-3-hydroxytetradecanoyl]-alpha-D-glucosaminyl 1-phosphate + UDP-2-N,3-O-bis[(3R)-3-hydroxytetradecanoyl]-alpha-D-glucosamine = lipid A disaccharide (E. coli) + UDP + H(+). The enzyme catalyses a lipid X + a UDP-2-N,3-O-bis[(3R)-3-hydroxyacyl]-alpha-D-glucosamine = a lipid A disaccharide + UDP + H(+). Its pathway is glycolipid biosynthesis; lipid IV(A) biosynthesis; lipid IV(A) from (3R)-3-hydroxytetradecanoyl-[acyl-carrier-protein] and UDP-N-acetyl-alpha-D-glucosamine: step 5/6. Condensation of UDP-2,3-diacylglucosamine and 2,3-diacylglucosamine-1-phosphate to form lipid A disaccharide, a precursor of lipid A, a phosphorylated glycolipid that anchors the lipopolysaccharide to the outer membrane of the cell. The protein is Lipid-A-disaccharide synthase of Escherichia coli (strain SMS-3-5 / SECEC).